The chain runs to 121 residues: uncharacterized protein (121 aa).

A helical membrane pass occupies residues 65–84; it reads TILFYTPTLICFLFLQNFLY.

The protein localises to the membrane. This is an uncharacterized protein from Saccharomyces cerevisiae (strain ATCC 204508 / S288c) (Baker's yeast).